Consider the following 207-residue polypeptide: Small ribosomal subunit protein uS2 (207 aa).

Belongs to the universal ribosomal protein uS2 family.

The polypeptide is Small ribosomal subunit protein uS2 (Methanocella arvoryzae (strain DSM 22066 / NBRC 105507 / MRE50)).